A 474-amino-acid polypeptide reads, in one-letter code: GTPase Der (474 aa).

EngA-type G domains lie at phenylalanine 3 to arginine 167 and leucine 204 to asparagine 379. Residues glycine 9–serine 16, aspartate 56–leucine 60, asparagine 119–glutamate 122, glycine 210–serine 217, aspartate 257–methionine 261, and asparagine 322–aspartate 325 contribute to the GTP site. Positions lysine 380–glutamate 464 constitute a KH-like domain.

This sequence belongs to the TRAFAC class TrmE-Era-EngA-EngB-Septin-like GTPase superfamily. EngA (Der) GTPase family. As to quaternary structure, associates with the 50S ribosomal subunit.

Its function is as follows. GTPase that plays an essential role in the late steps of ribosome biogenesis. In Allorhizobium ampelinum (strain ATCC BAA-846 / DSM 112012 / S4) (Agrobacterium vitis (strain S4)), this protein is GTPase Der.